Consider the following 1091-residue polypeptide: Neural cell adhesion molecule 1 (1091 aa).

Residues 1–19 (MLPAAALPWTLFFLGAAAS) form the signal peptide. 5 consecutive Ig-like C2-type domains span residues 20 to 113 (LQVD…VNVK), 116 to 205 (QKLM…KDIQ), 212 to 301 (PSVR…ATIH), 308 to 403 (PKIT…LEVQ), and 406 to 495 (PKLQ…FILV). The Extracellular segment spans residues 20-711 (LQVDIVPSQG…STSPTSGLGT (692 aa)). 2 cysteine pairs are disulfide-bonded: cysteine 41–cysteine 96 and cysteine 139–cysteine 189. Heparin is bound by residues 152-156 (KHKGR) and 161-165 (KKDVR). Asparagine 222 carries an N-linked (GlcNAc...) asparagine glycan. Residues cysteine 235 and cysteine 287 are joined by a disulfide bond. N-linked (GlcNAc...) asparagine glycosylation is found at asparagine 315, asparagine 347, asparagine 423, asparagine 449, and asparagine 478. An intrachain disulfide couples cysteine 329 to cysteine 385. Cysteine 426 and cysteine 479 are disulfide-bonded. Fibronectin type-III domains lie at 499 to 598 (TPSS…TQPV) and 600 to 696 (EPSA…SAQP). A helical membrane pass occupies residues 712–729 (AAIVGILIVIFVLLLVAV). The Cytoplasmic portion of the chain corresponds to 730–1091 (DVTCYFLNKC…ATEIRHLQQK (362 aa)). Disordered regions lie at residues 756–809 (GAKG…TEPE), 840–916 (ATAQ…NNLS), 937–1023 (ETSK…GTFK), and 1041–1091 (TPAS…LQQK). Residues 758–799 (KGKDMEEGKAAFSKDESKEPIVEVRTEEERTPNHDGGKHTEP) show a composition bias toward basic and acidic residues. The span at 845 to 856 (SPTSETTTLTSS) shows a compositional bias: low complexity. Composition is skewed to polar residues over residues 904-916 (DTPS…NNLS) and 980-1012 (QPST…PSQN). Basic and acidic residues-rich tracts occupy residues 1013–1023 (EDFKMDEGTFK) and 1068–1091 (KTEK…LQQK).

Post-translationally, polysialylated by ST8SIA2 and ST8SIA4. Polysialylation modulates cell interactions by confering both attractive and repulsive properties that are highly regulated by ST8SIA2 and ST8SIA4. Polysialylation is formed on a-2,3-linked sialic acid of core glycans.

It is found in the cell membrane. This protein is a cell adhesion molecule involved in neuron-neuron adhesion, neurite fasciculation, outgrowth of neurites, etc. This Gallus gallus (Chicken) protein is Neural cell adhesion molecule 1.